The primary structure comprises 254 residues: 5-oxoprolinase subunit A (254 aa).

It belongs to the LamB/PxpA family. As to quaternary structure, forms a complex composed of PxpA, PxpB and PxpC.

It carries out the reaction 5-oxo-L-proline + ATP + 2 H2O = L-glutamate + ADP + phosphate + H(+). Catalyzes the cleavage of 5-oxoproline to form L-glutamate coupled to the hydrolysis of ATP to ADP and inorganic phosphate. This chain is 5-oxoprolinase subunit A, found in Rhodopseudomonas palustris (strain ATCC BAA-98 / CGA009).